The primary structure comprises 1130 residues: Roquin-1 (1130 aa).

Cys-14, Cys-17, Cys-33, His-35, Cys-38, Cys-50, and Asp-53 together coordinate Zn(2+). The RING-type; degenerate zinc-finger motif lies at 14–54; sequence CPICTQTFDETIRKPISLGCGHTVCKMCLNKLHRKACPFDQ. The tract at residues 128-176 is HEPN-N; sequence VLSRPMQRKLVTLVHCQLVEEEGRIRAMRAARSLGERTVTELILQHQNP. Residues 177–326 are ROQ; it reads QQLSSNLWAA…MQSIIDKLQT (150 aa). An HEPN-C region spans residues 327–399; it reads PASFAQSVQE…GLVDYIQNHS (73 aa). The C3H1-type zinc finger occupies 413–441; that stretch reads KYKTYMCRDMKQRGGCPRGASCTFAHSQE. Ser-462 bears the Phosphoserine mark. 2 disordered regions span residues 493-567 and 722-750; these read LPNG…DLPP and PHPA…PSLD. Residues 497–506 show a composition bias toward polar residues; that stretch reads IASSGSTVTQ. A phosphoserine mark is found at Ser-531 and Ser-535. Pro residues-rich tracts occupy residues 553–567 and 732–746; these read NPHP…DLPP and PRDP…PQPH. A phosphoserine mark is found at Ser-861, Ser-1107, and Ser-1110. The disordered stretch occupies residues 1100-1130; sequence KTSSLNLSEDSEGGGDNNDSQRSGVVSNSAP. Positions 1116 to 1130 are enriched in polar residues; it reads NNDSQRSGVVSNSAP.

Interacts with DDX6 and EDC4. Interacts with CCR4-NOT deadenylase complex. Interacts with RC3H1; the interaction is RNA independent. Proteolytically cleaved after Arg-510 and Arg-579 by MALT1 in activated CD4(+) T cells; cleavage at Arg-510 and Arg-579 is critical for promoting RC3H1 degradation in response to T-cell receptor (TCR) stimulation, and hence is necessary for prolonging the stability of a set of mRNAs controlling Th17 cell differentiation. Widely expressed, with highest levels in lymph node and thymus and slightly lesser amounts in brain, lung, and spleen (at protein level). Very weak expression in heart, muscle, and kidney (at protein level). Expressed in CD4(+) helper T-cells (at protein level).

Its subcellular location is the cytoplasm. The protein resides in the P-body. It localises to the cytoplasmic granule. The enzyme catalyses S-ubiquitinyl-[E2 ubiquitin-conjugating enzyme]-L-cysteine + [acceptor protein]-L-lysine = [E2 ubiquitin-conjugating enzyme]-L-cysteine + N(6)-ubiquitinyl-[acceptor protein]-L-lysine.. Its pathway is protein modification; protein ubiquitination. Post-transcriptional repressor of mRNAs containing a conserved stem loop motif, called constitutive decay element (CDE), which is often located in the 3'-UTR, as in HMGXB3, ICOS, IER3, NFKBID, NFKBIZ, PPP1R10, TNF, TNFRSF4 and in many more mRNAs. Cleaves translationally inactive mRNAs harboring a stem-loop (SL), often located in their 3'-UTRs, during the early phase of inflammation in a helicase UPF1-independent manner. Binds to CDE and promotes mRNA deadenylation and degradation. This process does not involve miRNAs. In follicular helper T (Tfh) cells, represses of ICOS and TNFRSF4/Ox40 expression, thus preventing spontaneous Tfh cell differentiation, germinal center B-cell differentiation in the absence of immunization and autoimmunity. In resting or LPS-stimulated macrophages, controls inflammation by suppressing TNF expression. Also recognizes CDE in its own mRNA and in that of paralogous RC3H2, possibly leading to feedback loop regulation. Inhibits cooperatively with ZC3H12A the differentiation of helper T cells Th17 in lungs. They repress target mRNA encoding the Th17 cell-promoting factors IL6, ICOS, REL, IRF4, NFKBID and NFKBIZ. The cooperation requires RNA-binding by RC3H1 and the nuclease activity of ZC3H12A. Recognizes and binds mRNAs containing a hexaloop stem-loop motif, called alternative decay element (ADE). Together with ZC3H12A, destabilizes TNFRSF4/OX40 mRNA by binding to the conserved stem loop structure in its 3'UTR. Able to interact with double-stranded RNA. miRNA-binding protein that regulates microRNA homeostasis. Enhances DICER-mediated processing of pre-MIR146a but reduces mature MIR146a levels through an increase of 3' end uridylation. Both inhibits ICOS mRNA expression and they may act together to exert the suppression. Acts as a ubiquitin E3 ligase. Pairs with E2 enzymes UBE2A, UBE2B, UBE2D2, UBE2F, UBE2G1, UBE2G2 and UBE2L3 and produces polyubiquitin chains. Shows the strongest activity when paired with UBE2N:UBE2V1 or UBE2N:UBE2V2 E2 complexes and generate both short and long polyubiquitin chains. The sequence is that of Roquin-1 from Mus musculus (Mouse).